Reading from the N-terminus, the 623-residue chain is V-type proton ATPase catalytic subunit A (623 aa).

Gly252–Thr259 lines the ATP pocket.

It belongs to the ATPase alpha/beta chains family. As to quaternary structure, V-ATPase is a heteromultimeric enzyme composed of a peripheral catalytic V1 complex (main components: subunits A, B, C, D, E, and F) attached to an integral membrane V0 proton pore complex (main component: the proteolipid protein).

It carries out the reaction ATP + H2O + 4 H(+)(in) = ADP + phosphate + 5 H(+)(out). In terms of biological role, catalytic subunit of the peripheral V1 complex of vacuolar ATPase. V-ATPase vacuolar ATPase is responsible for acidifying a variety of intracellular compartments in eukaryotic cells. This Gossypium hirsutum (Upland cotton) protein is V-type proton ATPase catalytic subunit A (CVA69.24).